Consider the following 633-residue polypeptide: DNA repair protein XRCC1 (633 aa).

Residue Ser-140 is modified to Phosphoserine. A Glycyl lysine isopeptide (Lys-Gly) (interchain with G-Cter in SUMO1); alternate cross-link involves residue Lys-176. A Glycyl lysine isopeptide (Lys-Gly) (interchain with G-Cter in SUMO2); alternate cross-link involves residue Lys-176. Thr-198 is modified (phosphothreonine). Ser-199 is subject to Phosphoserine. The residue at position 202 (Thr-202) is a Phosphothreonine. Ser-204, Ser-226, and Ser-241 each carry phosphoserine. The span at 221 to 231 (AASSASPVSRA) shows a compositional bias: low complexity. Positions 221–313 (AASSASPVSR…TEPRRPRAGP (93 aa)) are disordered. Basic and acidic residues predominate over residues 240–257 (ESPKGKRKLDLNQEEKKT). Thr-257 carries the post-translational modification Phosphothreonine. Ser-259 and Ser-266 each carry phosphoserine. Residues 277 to 291 (APTRTPATAPVPARA) show a composition bias toward low complexity. The residue at position 281 (Thr-281) is a Phosphothreonine. A compositionally biased stretch (basic and acidic residues) spans 299 to 313 (PRGEGTEPRRPRAGP). The BRCT 1 domain occupies 315–403 (ELGKILQGVV…RRLPSQRYLM (89 aa)). At Ser-371 the chain carries Phosphoserine; by PRKDC. Disordered regions lie at residues 400–462 (RYLM…AASP), 471–490 (EGVQSEGQDNGAEDSGDTED), and 498–536 (QKEHRLPPGQEENGEDPYAGSTDENTDSEEHQEPPDLPV). Ser-408, Ser-409, Ser-410, and Ser-421 each carry phosphoserine. A compositionally biased stretch (low complexity) spans 427-443 (KLPQKQPQTKTKPTQAA). Ser-446 and Ser-447 each carry phosphoserine. Thr-453 and Thr-457 each carry phosphothreonine. 2 positions are modified to phosphoserine: Ser-461 and Ser-485. A compositionally biased stretch (acidic residues) spans 481–490 (GAEDSGDTED). Phosphothreonine is present on Thr-488. A Phosphoserine modification is found at Ser-518. 2 positions are modified to phosphothreonine: Thr-519 and Thr-523. Residues 538–629 (ELPDFFQGKH…KLLPHQLYGV (92 aa)) form the BRCT 2 domain.

In terms of assembly, homodimer. Interacts with polynucleotide kinase (PNK), DNA polymerase-beta (POLB) and DNA ligase III (LIG3). Interacts with APTX and APLF. Interacts with APEX1; the interaction is induced by SIRT1 and increases with the acetylated form of APEX1. Interacts with (poly-ADP-ribosylated) PARP1. In terms of processing, phosphorylation of Ser-371 causes dimer dissociation. Phosphorylation by CK2 promotes interaction with APTX and APLF. Post-translationally, sumoylated. In terms of tissue distribution, expressed in fibroblasts, retinal pigmented epithelial cells and lymphoblastoid cells (at protein level).

The protein resides in the nucleus. It localises to the chromosome. In terms of biological role, scaffold protein involved in DNA single-strand break repair by mediating the assembly of DNA break repair protein complexes. Negatively regulates ADP-ribosyltransferase activity of PARP1 during base-excision repair in order to prevent excessive PARP1 activity. Recognizes and binds poly-ADP-ribose chains: specifically binds auto-poly-ADP-ribosylated PARP1, limiting its activity. This is DNA repair protein XRCC1 from Homo sapiens (Human).